A 355-amino-acid chain; its full sequence is 4-dimethylallyltryptophan N-methyltransferase easF (355 aa).

The protein belongs to the methyltransferase superfamily. Homodimer.

It carries out the reaction 4-(3-methylbut-2-enyl)-L-tryptophan + S-adenosyl-L-methionine = 4-(3-methylbut-2-enyl)-L-abrine + S-adenosyl-L-homocysteine + H(+). It functions in the pathway alkaloid biosynthesis; ergot alkaloid biosynthesis. Functionally, 4-dimethylallyltryptophan N-methyltransferase; part of the gene cluster that mediates the biosynthesis of fungal ergot alkaloid. DmaW catalyzes the first step of ergot alkaloid biosynthesis by condensing dimethylallyl diphosphate (DMAP) and tryptophan to form 4-dimethylallyl-L-tryptophan. The second step is catalyzed by the methyltransferase easF that methylates 4-dimethylallyl-L-tryptophan in the presence of S-adenosyl-L-methionine, resulting in the formation of 4-dimethylallyl-L-abrine. The catalase easC and the FAD-dependent oxidoreductase easE then transform 4-dimethylallyl-L-abrine to chanoclavine-I which is further oxidized by easD in the presence of NAD(+), resulting in the formation of chanoclavine-I aldehyde. Agroclavine dehydrogenase easG then mediates the conversion of chanoclavine-I aldehyde to agroclavine via a non-enzymatic adduct reaction: the substrate is an iminium intermediate that is formed spontaneously from chanoclavine-I aldehyde in the presence of glutathione. Further conversion of agroclavine to paspalic acid is a two-step process involving oxidation of agroclavine to elymoclavine and of elymoclavine to paspalic acid, the second step being performed by the elymoclavine oxidase cloA. However, cloA does not encode a functional enzyme indicating that C.fusiformis terminates its ergot alkaloid pathway at elymoclavine. The sequence is that of 4-dimethylallyltryptophan N-methyltransferase easF from Claviceps fusiformis (Ergot fungus).